Consider the following 401-residue polypeptide: MNRKELEKLGFASKQIHAGSIKNKYGALATPIYQTSTFAFDSAEQGGRRFALEEEGYIYTRLGNPTTTVVEEKLACLENGEACMSASSGIGAVTSCIWSIVNAGDHIVAGKTLYGCTFAFLNHGLSRFGVDVTFVDTRDPENVKKALKPNTKIVYLETPANPNMYLCDIAAVSKIAHAHNPECKVIVDNTYMTPYLQRPLDLGADVVLHSATKYLNGHGDVIAGFVVGKKEFIDQVRFVGVKDMTGSTLGPFEAYLIGRGMKTLDIRMEKHCANAQKVAEFLEKHPAVESIAFPGLKSFPQYELAKKQMKLCGAMIAFTVKGGLEAGKTLINSVKFATIAVSLGDAETLIQHPASMTHSPYTPEERAASDIAEGLVRLSVGLEDAEDIIADLKQALDKLVK.

Residues 59-61 (YTR) and 89-90 (GI) each bind pyridoxal 5'-phosphate. Residue Y114 coordinates substrate. 210-212 (SAT) provides a ligand contact to pyridoxal 5'-phosphate. Position 213 is an N6-(pyridoxal phosphate)lysine (K213). R377 is a substrate binding site.

Belongs to the trans-sulfuration enzymes family. L-methionine gamma-lyase subfamily. Homotetramer; dimer of active dimers. It depends on pyridoxal 5'-phosphate as a cofactor.

The enzyme catalyses L-methionine + H2O = methanethiol + 2-oxobutanoate + NH4(+). The catalysed reaction is L-homocysteine + H2O = 2-oxobutanoate + hydrogen sulfide + NH4(+) + H(+). Catalyzes the alpha,gamma-elimination of L-methionine to produce methanethiol, 2-oxobutanoate and ammonia; methanethiol (methyl mercaptan) is considered to be one of the main causes of the oral malodor associated with periodontitis and may also play a role in the pathogenicity of T.denticola. Also displays homocysteine desulfhydrase activity, degrading homocysteine to produce hydrogen sulfide, 2-oxobutanoate and ammonia. In Treponema denticola (strain ATCC 35405 / DSM 14222 / CIP 103919 / JCM 8153 / KCTC 15104), this protein is L-methionine gamma-lyase.